The sequence spans 421 residues: Type II methyltransferase M.SfiI (421 aa).

It belongs to the N(4)/N(6)-methyltransferase family. N(4) subfamily.

The catalysed reaction is a 2'-deoxycytidine in DNA + S-adenosyl-L-methionine = an N(4)-methyl-2'-deoxycytidine in DNA + S-adenosyl-L-homocysteine + H(+). A beta subtype methylase, recognizes the double-stranded sequence 5'-GGCCNNNNNGGCC-3', methylates C-? on both strands, and protects the DNA from cleavage by the SfiI endonuclease. The polypeptide is Type II methyltransferase M.SfiI (Streptomyces fimbriatus).